A 308-amino-acid polypeptide reads, in one-letter code: Protein translocase subunit SecF (308 aa).

The next 6 membrane-spanning stretches (helical) occupy residues 23–42 (VSYSFSIILSLISLIWIGIY), 140–160 (IEAGAMAMLFSFLAIMVYIGV), 164–184 (WYFGFGILIALVHDVILALGF), 194–214 (LSTIAAVLTIIGYSVNDSVVI), 246–266 (ILTVITTLLANLALILFGGKA), and 272–292 (VLVFFGIIAGTYSSIFISAPI).

It belongs to the SecD/SecF family. SecF subfamily. Forms a complex with SecD. Part of the essential Sec protein translocation apparatus which comprises SecA, SecYEG and auxiliary proteins SecDF-YajC and YidC.

The protein localises to the cell inner membrane. Part of the Sec protein translocase complex. Interacts with the SecYEG preprotein conducting channel. SecDF uses the proton motive force (PMF) to complete protein translocation after the ATP-dependent function of SecA. In Rickettsia typhi (strain ATCC VR-144 / Wilmington), this protein is Protein translocase subunit SecF.